Reading from the N-terminus, the 269-residue chain is JmjC domain-containing protein 8 (269 aa).

The first 24 residues, 1–24, serve as a signal peptide directing secretion; it reads MAAAGRRGLLLLFVLWMMVTVILP. Residues asparagine 135, asparagine 145, and asparagine 214 are each glycosylated (N-linked (GlcNAc...) asparagine). In terms of domain architecture, JmjC spans 136 to 269; sequence DTLYFFGDNN…TSVFISTFLG (134 aa).

Oligomer. Dimer. Interacts with PKM; regulates angiogenesis and metabolism. Post-translationally, N-glycosylated.

It is found in the endoplasmic reticulum lumen. It localises to the cytoplasm. Functionally, functions as a positive regulator of TNF-induced NF-kappaB signaling. Regulates angiogenesis and cellular metabolism through interaction with PKM. In Mus musculus (Mouse), this protein is JmjC domain-containing protein 8.